The following is a 199-amino-acid chain: Hematopoietic prostaglandin D synthase (199 aa).

Residues 2–79 (PNYKLTYFNM…YLTKNTDLAG (78 aa)) enclose the GST N-terminal domain. Glutathione is bound by residues Tyr-8, Arg-14, Trp-39, 49 to 51 (GKI), and 63 to 64 (QS). The region spanning 81–199 (TEMEQCHVDA…WIKRRPQTKL (119 aa)) is the GST C-terminal domain.

Belongs to the GST superfamily. Sigma family. Homodimer. Glutathione serves as cofactor. As to expression, expressed in a number of megakaryocytic cell lines but not in platelets. Highly expressed in adipose tissue, macrophages and placenta. Also expressed at lower levels in lung, heart, lymph nodes, appendix, bone marrow and fetal liver.

It is found in the cytoplasm. The enzyme catalyses prostaglandin H2 = prostaglandin D2. It carries out the reaction RX + glutathione = an S-substituted glutathione + a halide anion + H(+). It catalyses the reaction 2-glyceryl-prostaglandin H2 = 2-glyceryl-prostaglandin D2. With respect to regulation, prostaglandin PGD2 synthesis is stimulated by calcium and magnesium ions. One calcium or magnesium ion is bound between the subunits of the homodimer. The interactions with the protein are for the most part mediated via water molecules. Magnesium increases the affinity for glutathione, while calcium has no effect on the affinity for glutathione. Bifunctional enzyme which catalyzes both the conversion of PGH2 to PGD2, a prostaglandin involved in smooth muscle contraction/relaxation and a potent inhibitor of platelet aggregation, and the conjugation of glutathione with a wide range of aryl halides and organic isothiocyanates. Also exhibits low glutathione-peroxidase activity towards cumene hydroperoxide. The polypeptide is Hematopoietic prostaglandin D synthase (Homo sapiens (Human)).